A 291-amino-acid chain; its full sequence is Stomatin-like protein 3 (291 aa).

At Ser7 the chain carries Phosphoserine. The helical; Signal-anchor for type III membrane protein transmembrane segment at 29–49 threads the bilayer; sequence WILFSLSFLLVIITFPISIWM. Residues 50–291 are Cytoplasmic-facing; the sequence is CLKIIKEYER…DNHKKLPNKA (242 aa). Residue Ser241 is modified to Phosphoserine.

Belongs to the band 7/mec-2 family. As to quaternary structure, homodimer. Interacts with PIEZO1 and PIEZO2.

It localises to the cell membrane. Its function is as follows. Required for the function of many mechanoreceptors. Modulate mechanotransduction channels and acid-sensing ion channels (ASIC) proteins. Potentiates PIEZO1 and PIEZO2 function by increasing their sensitivity to mechanical stimulations. The polypeptide is Stomatin-like protein 3 (STOML3) (Homo sapiens (Human)).